The chain runs to 178 residues: Large ribosomal subunit protein uL6 (178 aa).

This sequence belongs to the universal ribosomal protein uL6 family. In terms of assembly, part of the 50S ribosomal subunit.

Functionally, this protein binds to the 23S rRNA, and is important in its secondary structure. It is located near the subunit interface in the base of the L7/L12 stalk, and near the tRNA binding site of the peptidyltransferase center. The sequence is that of Large ribosomal subunit protein uL6 from Corynebacterium urealyticum (strain ATCC 43042 / DSM 7109).